The primary structure comprises 212 residues: Putative aryl-alcohol dehydrogenase AAD6 (212 aa).

The active-site Proton donor is the tyrosine 76.

It belongs to the aldo/keto reductase family. Aldo/keto reductase 2 subfamily.

The sequence is that of Putative aryl-alcohol dehydrogenase AAD6 from Saccharomyces cerevisiae (strain ATCC 204508 / S288c) (Baker's yeast).